A 629-amino-acid polypeptide reads, in one-letter code: Transferrin (629 aa).

A signal peptide spans 1-21 (MTIKNVLKLAALLGVLALVQA). Transferrin-like domains are found at residues 26-366 (YRMC…ERDG) and 372-621 (MKMC…GLKC). 2 disulfides stabilise this stretch: Cys29/Cys63 and Cys38/Cys54. Residue Tyr111 coordinates Fe(3+). Intrachain disulfides connect Cys135–Cys231, Cys184–Cys210, Cys207–Cys216, Cys270–Cys283, Cys375–Cys409, and Cys385–Cys403. Hydrogencarbonate contacts are provided by Thr137, Arg141, Val143, and Gly144. Fe(3+) is bound at residue Tyr225. Positions 408 and 561 each coordinate Fe(3+).

Belongs to the transferrin family. As to quaternary structure, monomer.

Transferrins are iron binding transport proteins which bind Fe(3+) ion in association with the binding of an anion, usually bicarbonate. This transferrin binds only one Fe(3+) ion per protein molecule. Transports iron ions from the hemolymph into the eggs during the vitellogenic stage (oogenesis). In Sarcophaga peregrina (Flesh fly), this protein is Transferrin.